The sequence spans 78 residues: Acyl carrier protein (78 aa).

One can recognise a Carrier domain in the interval 2–77; it reads SDIAERVKKI…DAVKFIEKAQ (76 aa). S37 carries the O-(pantetheine 4'-phosphoryl)serine modification.

The protein belongs to the acyl carrier protein (ACP) family. 4'-phosphopantetheine is transferred from CoA to a specific serine of apo-ACP by AcpS. This modification is essential for activity because fatty acids are bound in thioester linkage to the sulfhydryl of the prosthetic group.

The protein resides in the cytoplasm. It participates in lipid metabolism; fatty acid biosynthesis. Functionally, carrier of the growing fatty acid chain in fatty acid biosynthesis. This is Acyl carrier protein from Rhizobium etli (strain CIAT 652).